The sequence spans 123 residues: Double-stranded DNA deaminase immunity protein (123 aa).

As to quaternary structure, the toxic domain forms a 1:1 complex with the DddI immunity protein. This protein blocks the active site of the toxin.

Its function is as follows. Immunity protein component of a toxin-immunity protein module, which functions as a cellular contact-dependent growth inhibition (CDI) system. CDI modules allow bacteria to communicate with and inhibit the growth of closely related neighboring bacteria in a contact-dependent fashion. Bacteria that have this module inhibit or kill bacteria without it, giving them a growth advantage. Specifically inhibits the toxic activity of cognate toxin DddA (C-terminal 163 residue fragment) upon expression in E.coli. In Burkholderia cenocepacia (strain H111), this protein is Double-stranded DNA deaminase immunity protein.